Consider the following 360-residue polypeptide: Photosystem II protein D1 (360 aa).

Helical transmembrane passes span 29-46 (YIGW…TATC), 118-133 (HFLI…EWEL), and 142-156 (WICV…AATA). A chlorophyll a-binding site is contributed by His-118. Tyr-126 serves as a coordination point for pheophytin a. Positions 170 and 189 each coordinate [CaMn4O5] cluster. A helical transmembrane segment spans residues 197–218 (FHMAGVAGVFGGALFSAMHGSL). His-198 is a chlorophyll a binding site. Residues His-215 and 264-265 (SF) contribute to the a quinone site. Residue His-215 participates in Fe cation binding. His-272 serves as a coordination point for Fe cation. A helical transmembrane segment spans residues 274-288 (FLGAWPVVGIWLTAI). His-332, Glu-333, Asp-342, and Ala-344 together coordinate [CaMn4O5] cluster. Residues 345–360 (SNSVVPVALTAPSVEA) constitute a propeptide that is removed on maturation.

This sequence belongs to the reaction center PufL/M/PsbA/D family. PSII is composed of 1 copy each of membrane proteins PsbA, PsbB, PsbC, PsbD, PsbE, PsbF, PsbH, PsbI, PsbJ, PsbK, PsbL, PsbM, PsbT, PsbX, PsbY, PsbZ, Psb30/Ycf12, at least 3 peripheral proteins of the oxygen-evolving complex and a large number of cofactors. It forms dimeric complexes. It depends on The D1/D2 heterodimer binds P680, chlorophylls that are the primary electron donor of PSII, and subsequent electron acceptors. It shares a non-heme iron and each subunit binds pheophytin, quinone, additional chlorophylls, carotenoids and lipids. D1 provides most of the ligands for the Mn4-Ca-O5 cluster of the oxygen-evolving complex (OEC). There is also a Cl(-1) ion associated with D1 and D2, which is required for oxygen evolution. The PSII complex binds additional chlorophylls, carotenoids and specific lipids. as a cofactor. Post-translationally, tyr-161 forms a radical intermediate that is referred to as redox-active TyrZ, YZ or Y-Z. C-terminally processed by CTPA; processing is essential to allow assembly of the oxygen-evolving complex and thus photosynthetic growth.

The protein resides in the plastid. Its subcellular location is the chloroplast thylakoid membrane. It catalyses the reaction 2 a plastoquinone + 4 hnu + 2 H2O = 2 a plastoquinol + O2. Its function is as follows. Photosystem II (PSII) is a light-driven water:plastoquinone oxidoreductase that uses light energy to abstract electrons from H(2)O, generating O(2) and a proton gradient subsequently used for ATP formation. It consists of a core antenna complex that captures photons, and an electron transfer chain that converts photonic excitation into a charge separation. The D1/D2 (PsbA/PsbD) reaction center heterodimer binds P680, the primary electron donor of PSII as well as several subsequent electron acceptors. The sequence is that of Photosystem II protein D1 from Cyanidioschyzon merolae (strain NIES-3377 / 10D) (Unicellular red alga).